The sequence spans 1564 residues: ATP-dependent permease PDR10 (1564 aa).

Residues 1 to 16 (MLQAPSSSNSGLNQGN) show a composition bias toward polar residues. The segment at 1–37 (MLQAPSSSNSGLNQGNAAPDGPPNETQPYEGLDAAAQ) is disordered. Residues 1 to 587 (MLQAPSSSNS…AAIFFAILFN (587 aa)) are Cytoplasmic-facing. In terms of domain architecture, ABC transporter 1 spans 174-430 (ISRRLFHRTH…FQRMGYVCPE (257 aa)). A run of 5 helical transmembrane segments spans residues 588 to 608 (AFSS…TEKH), 624 to 644 (TFSD…PYYF), 674 to 694 (RCIG…SVLL), 699 to 719 (MYTG…WISY), and 732 to 752 (INEF…GPNY). A glycan (N-linked (GlcNAc...) asparagine) is linked at Asn754. The segment covering 839–849 (KGIVSEKKKKN) has biased composition (basic residues). The disordered stretch occupies residues 839-872 (KGIVSEKKKKNQPTLSTSDAEKDVEMNNNSSATD). Residues 841–861 (IVSEKKKKNQPTLSTSDAEKD) traverse the membrane as a helical segment. The Cytoplasmic portion of the chain corresponds to 862 to 1304 (VEMNNNSSAT…IFMFTVVFNP (443 aa)). In terms of domain architecture, ABC transporter 2 spans 923–1166 (FHWKNLCYDI…MINYFEAHGA (244 aa)). 959–966 (GASGAGKT) is an ATP binding site. The next 6 helical transmembrane spans lie at 1305–1325 (ILQQ…ARER), 1340–1360 (ILVE…VYYY), 1390–1410 (VYIS…ENAA), 1426–1446 (VLAT…VSPL), 1459–1479 (ANAS…PSGM), and 1491–1511 (STGT…FCQF). The Cytoplasmic segment spans residues 1512-1564 (SSTNDYLATVSSSYSRRWMNYGIFSAYIVFDYCAAIFLYWLVRVPKKSKKLKK).

The protein belongs to the ABC transporter superfamily. ABCG family. PDR (TC 3.A.1.205) subfamily.

It is found in the membrane. This is ATP-dependent permease PDR10 (PDR10) from Saccharomyces cerevisiae (strain ATCC 204508 / S288c) (Baker's yeast).